A 248-amino-acid polypeptide reads, in one-letter code: Triosephosphate isomerase (248 aa).

9-11 contributes to the substrate binding site; that stretch reads NWK. Residue H94 is the Electrophile of the active site. The Proton acceptor role is filled by E166. Residues G172, S212, and 233–234 contribute to the substrate site; that span reads GG.

This sequence belongs to the triosephosphate isomerase family. As to quaternary structure, homodimer.

The protein localises to the cytoplasm. It carries out the reaction D-glyceraldehyde 3-phosphate = dihydroxyacetone phosphate. The protein operates within carbohydrate biosynthesis; gluconeogenesis. It functions in the pathway carbohydrate degradation; glycolysis; D-glyceraldehyde 3-phosphate from glycerone phosphate: step 1/1. Its function is as follows. Involved in the gluconeogenesis. Catalyzes stereospecifically the conversion of dihydroxyacetone phosphate (DHAP) to D-glyceraldehyde-3-phosphate (G3P). In Alkaliphilus oremlandii (strain OhILAs) (Clostridium oremlandii (strain OhILAs)), this protein is Triosephosphate isomerase.